We begin with the raw amino-acid sequence, 334 residues long: MTKVVVCALYKFVSLPHFESIRAPLLAMMEQAEIKGTLLLASEGINGTVAGTQEAIEALLVWLNGQNGLDNIVHKLSFDDEMPFYRTKVKLKNEIVTMGVEGIDPLKVVGTYVKPQDWNALISDPDVILVDTRNDYEVQIGTFKNAVNPVTETFREFPEYVKQNLDPAKHKKVAMFCTGGIRCEKSTAYLKEQGFDEVYHLEGGILKYLEEVKAEESLWEGECFVFDNRVAVNHDLKKGQYDQCNACRMPITEVEKQSPAYVQGVSCPHCIDKISDEQRKRFVERERQVNLAKARNEAHIGSDVNQVIEARREKKEAQRRLAAEKNNAKKSQVL.

A Rhodanese domain is found at 123 to 217 (SDPDVILVDT…YLEEVKAEES (95 aa)). C177 (cysteine persulfide intermediate) is an active-site residue.

This sequence belongs to the TrhO family.

The catalysed reaction is uridine(34) in tRNA + AH2 + O2 = 5-hydroxyuridine(34) in tRNA + A + H2O. In terms of biological role, catalyzes oxygen-dependent 5-hydroxyuridine (ho5U) modification at position 34 in tRNAs. The protein is tRNA uridine(34) hydroxylase of Shewanella baltica (strain OS223).